The sequence spans 729 residues: Receptor-like protein 2 (729 aa).

An N-terminal signal peptide occupies residues 1–44 (MRSKAKGLVRPLITKPVQPLSSHMHLFLLCILFLSALFLTLSEA). Positions 45–82 (VCNLQDRESLIWFSGNVSSSVSPLNWNLSIDCCSWEGI) are N-cap. Over 45–707 (VCNLQDRESL…AKENDELNRT (663 aa)) the chain is Extracellular. Residues Asn-60 and Asn-71 are each glycosylated (N-linked (GlcNAc...) asparagine). LRR repeat units follow at residues 89-113 (DSHVTVISLPSRGLSGTLASSVQNI), 114-137 (HRLSRLDLSYNRLSGPLPPGFFST), 139-163 (DQLMILNLSYNSFNGELPLEQAFGN), 168-193 (FFSIQTLDLSSNLLEGEILRSSVYLQ), 195-219 (TINLISFNVSNNSFTGPIPSFMCRS), 220-244 (SPQLSKLDFSYNDFSGHISQELGRC), 245-268 (LRLTVLQAGFNNLSGVIPSEIYNL), 269-292 (SELEQLFLPANQLTGKIDNNITRL), 293-316 (RKLTSLALYSNHLEGEIPMDIGNL), 317-340 (SSLRSLQLHINNINGTVPLSLANC), 342-364 (KLVKLNLRVNQLGGGLTELEFSQ), 365-389 (LQSLKVLDLGNNSFTGALPDKIFSC), 391-413 (SLTAIRFAGNKLTGEISPQVLEL), 414-437 (ESLSFMGLSDNKLTNITGALSILQ), 439-464 (CRKLSTLILAKNFYDETVPSKEDFLS), 468-492 (FPKLRIFGVGACRLRGEIPAWLINL), 493-515 (NKVEVMDLSMNRFVGSIPGWLGT), 516-540 (LPDLFYLDLSDNLLTGELPKELFQL), 542-560 (ALMSQKITENNYLELPIFL), and 561-584 (NPNNVTTNQQYNKLYSFPPTIYIR). Residues Asn-145 and Asn-163 are each glycosylated (N-linked (GlcNAc...) asparagine). Residues Asn-202 and Asn-205 are each glycosylated (N-linked (GlcNAc...) asparagine). Residues Asn-256, Asn-267, Asn-288, Asn-315, Asn-330, and Asn-339 are each glycosylated (N-linked (GlcNAc...) asparagine). A glycan (N-linked (GlcNAc...) asparagine) is linked at Asn-375. Asn-428 carries an N-linked (GlcNAc...) asparagine glycan. N-linked (GlcNAc...) asparagine glycans are attached at residues Asn-564, Asn-587, Asn-611, Asn-622, Asn-635, Asn-657, and Asn-705. 3 LRR repeats span residues 599-623 (LKVLHILELLGNNLSGSIPDELSNL), 624-647 (TNLERLDLSNNNLSGSIPWSLTNL), and 649-672 (FLSYFNVANNSLEGPIPSEGQFDT). The C-cap/acidic domain stretch occupies residues 690–707 (LTSCKPTRAKENDELNRT). A helical transmembrane segment spans residues 708–728 (FLMGIAIGYFLSFVSILVVRA). A topological domain (cytoplasmic) is located at residue Trp-729.

The protein belongs to the RLP family.

It is found in the cell membrane. Functionally, involved in the perception of CLV3 and CLV3-like peptides, that act as extracellular signals regulating meristems maintenance. In Arabidopsis thaliana (Mouse-ear cress), this protein is Receptor-like protein 2.